Consider the following 185-residue polypeptide: Tetrahydromethanopterin S-methyltransferase subunit A 2 (185 aa).

The Cytoplasmic portion of the chain corresponds to 1 to 21 (MVDKKVDKKPVPEDWPHIVGD). A helical membrane pass occupies residues 22 to 38 (YVVGDAESPVAVVTLGS). Topologically, residues 39-185 (HMEDEPVRAG…LNKNKPDENT (147 aa)) are extracellular. Position 88 (H88) interacts with 5-hydroxybenzimidazolylcob(I)amide.

Belongs to the MtrA family. As to quaternary structure, the complex is composed of 8 subunits; MtrA, MtrB, MtrC, MtrD, MtrE, MtrF, MtrG and MtrH. 5-hydroxybenzimidazolylcob(I)amide serves as cofactor.

It is found in the cell membrane. The catalysed reaction is 5-methyl-5,6,7,8-tetrahydromethanopterin + coenzyme M + 2 Na(+)(in) = 5,6,7,8-tetrahydromethanopterin + methyl-coenzyme M + 2 Na(+)(out). The protein operates within one-carbon metabolism; methanogenesis from CO(2); methyl-coenzyme M from 5,10-methylene-5,6,7,8-tetrahydromethanopterin: step 2/2. In terms of biological role, part of a complex that catalyzes the formation of methyl-coenzyme M and tetrahydromethanopterin from coenzyme M and methyl-tetrahydromethanopterin. This is an energy-conserving, sodium-ion translocating step. This chain is Tetrahydromethanopterin S-methyltransferase subunit A 2, found in Methanothermobacter marburgensis (strain ATCC BAA-927 / DSM 2133 / JCM 14651 / NBRC 100331 / OCM 82 / Marburg) (Methanobacterium thermoautotrophicum).